We begin with the raw amino-acid sequence, 99 residues long: MSMQPTDHIRLTAFVHGHVQGVGFRWWTRSQALELGLAGSATNLDDGRVCVVAEGPEDRCRELLTRLGEQPSRHRRVGTVSTVIEQWSEPRGVEGFTER.

The 90-residue stretch at 10-99 (RLTAFVHGHV…PRGVEGFTER (90 aa)) folds into the Acylphosphatase-like domain. Residues arginine 25 and asparagine 43 contribute to the active site.

This sequence belongs to the acylphosphatase family.

The enzyme catalyses an acyl phosphate + H2O = a carboxylate + phosphate + H(+). The protein is Acylphosphatase (acyP) of Corynebacterium efficiens (strain DSM 44549 / YS-314 / AJ 12310 / JCM 11189 / NBRC 100395).